The sequence spans 189 residues: Flavin prenyltransferase UbiX (189 aa).

Residues 10-12 (GAS), Ser-36, 91-94 (STNT), and Arg-126 contribute to the FMN site. Dimethylallyl phosphate is bound by residues Tyr-156 and Lys-172.

Belongs to the UbiX/PAD1 family.

The catalysed reaction is dimethylallyl phosphate + FMNH2 = prenylated FMNH2 + phosphate. Flavin prenyltransferase that catalyzes the synthesis of the prenylated FMN cofactor (prenyl-FMN) for 4-hydroxy-3-polyprenylbenzoic acid decarboxylase UbiD. The prenyltransferase is metal-independent and links a dimethylallyl moiety from dimethylallyl monophosphate (DMAP) to the flavin N5 and C6 atoms of FMN. The chain is Flavin prenyltransferase UbiX from Aquifex aeolicus (strain VF5).